Consider the following 468-residue polypeptide: 3-isopropylmalate dehydratase large subunit 2 (468 aa).

[4Fe-4S] cluster is bound by residues C349, C409, and C412.

Belongs to the aconitase/IPM isomerase family. LeuC type 1 subfamily. In terms of assembly, heterodimer of LeuC and LeuD. Requires [4Fe-4S] cluster as cofactor.

The enzyme catalyses (2R,3S)-3-isopropylmalate = (2S)-2-isopropylmalate. Its pathway is amino-acid biosynthesis; L-leucine biosynthesis; L-leucine from 3-methyl-2-oxobutanoate: step 2/4. Catalyzes the isomerization between 2-isopropylmalate and 3-isopropylmalate, via the formation of 2-isopropylmaleate. The polypeptide is 3-isopropylmalate dehydratase large subunit 2 (Bradyrhizobium diazoefficiens (strain JCM 10833 / BCRC 13528 / IAM 13628 / NBRC 14792 / USDA 110)).